The following is a 177-amino-acid chain: Large ribosomal subunit protein uL6 (177 aa).

Belongs to the universal ribosomal protein uL6 family. Part of the 50S ribosomal subunit.

Its function is as follows. This protein binds to the 23S rRNA, and is important in its secondary structure. It is located near the subunit interface in the base of the L7/L12 stalk, and near the tRNA binding site of the peptidyltransferase center. The sequence is that of Large ribosomal subunit protein uL6 from Tolumonas auensis (strain DSM 9187 / NBRC 110442 / TA 4).